A 214-amino-acid chain; its full sequence is tRNA (guanine-N(7)-)-methyltransferase (214 aa).

Residues E44, E69, D96, and D118 each coordinate S-adenosyl-L-methionine. D118 is a catalytic residue. K122 serves as a coordination point for substrate. An interaction with RNA region spans residues 124–129; it reads RHEKRR. Substrate is bound by residues D154 and 192-195; that span reads TEYE.

Belongs to the class I-like SAM-binding methyltransferase superfamily. TrmB family.

The enzyme catalyses guanosine(46) in tRNA + S-adenosyl-L-methionine = N(7)-methylguanosine(46) in tRNA + S-adenosyl-L-homocysteine. It participates in tRNA modification; N(7)-methylguanine-tRNA biosynthesis. Catalyzes the formation of N(7)-methylguanine at position 46 (m7G46) in tRNA. The chain is tRNA (guanine-N(7)-)-methyltransferase from Lacticaseibacillus casei (strain BL23) (Lactobacillus casei).